The chain runs to 694 residues: Elongation factor G (694 aa).

The tr-type G domain occupies 12–286 (SKLRNIGIMA…AVVDYLPSPI (275 aa)). Residues 21 to 28 (AHIDAGKT), 85 to 89 (DTPGH), and 139 to 142 (NKMD) contribute to the GTP site.

This sequence belongs to the TRAFAC class translation factor GTPase superfamily. Classic translation factor GTPase family. EF-G/EF-2 subfamily.

The protein resides in the cytoplasm. Catalyzes the GTP-dependent ribosomal translocation step during translation elongation. During this step, the ribosome changes from the pre-translocational (PRE) to the post-translocational (POST) state as the newly formed A-site-bound peptidyl-tRNA and P-site-bound deacylated tRNA move to the P and E sites, respectively. Catalyzes the coordinated movement of the two tRNA molecules, the mRNA and conformational changes in the ribosome. This Pseudothermotoga lettingae (strain ATCC BAA-301 / DSM 14385 / NBRC 107922 / TMO) (Thermotoga lettingae) protein is Elongation factor G.